We begin with the raw amino-acid sequence, 177 residues long: Secretion monitor (177 aa).

Positions 1–37 (MIGILNRWRQFGRRYFWPHLLLGMVAASLGVPSNLSG) are cleaved as a signal peptide.

This sequence belongs to the SecM family.

It is found in the cytoplasm. The protein localises to the cytosol. The protein resides in the periplasm. Its function is as follows. Regulates secA expression by translational coupling of the secM secA operon. Translational pausing at a specific Pro residue 5 residues before the end of the protein may allow disruption of a mRNA repressor helix that normally suppresses secA translation initiation. In Yersinia pseudotuberculosis serotype O:1b (strain IP 31758), this protein is Secretion monitor.